The following is a 140-amino-acid chain: MSRTVMAFDYGTKSIGSAIGQEITGTASPLKAFKANDGIPNWDEIEKQIKEWQPNLLIVGLPTDLHGKDLDTITPRAKKFAQRLHGRFGLPVELHDERLSTTEARAELFAMGGYKALSKGNVDCQSAVIILESWFESQWG.

The protein belongs to the YqgF nuclease family.

It is found in the cytoplasm. Its function is as follows. Could be a nuclease involved in processing of the 5'-end of pre-16S rRNA. This is Putative pre-16S rRNA nuclease from Vibrio cholerae serotype O1 (strain ATCC 39541 / Classical Ogawa 395 / O395).